We begin with the raw amino-acid sequence, 141 residues long: Putative antirestriction protein YubI (141 aa).

This sequence belongs to the antirestriction protein family.

This Escherichia coli (strain K12) protein is Putative antirestriction protein YubI (yubI).